We begin with the raw amino-acid sequence, 257 residues long: Acetylglutamate kinase (257 aa).

Residues 41–42, arginine 63, and asparagine 155 contribute to the substrate site; that span reads GG.

This sequence belongs to the acetylglutamate kinase family. ArgB subfamily.

The protein resides in the cytoplasm. The catalysed reaction is N-acetyl-L-glutamate + ATP = N-acetyl-L-glutamyl 5-phosphate + ADP. Its pathway is amino-acid biosynthesis; L-arginine biosynthesis; N(2)-acetyl-L-ornithine from L-glutamate: step 2/4. Its function is as follows. Catalyzes the ATP-dependent phosphorylation of N-acetyl-L-glutamate. In Solibacter usitatus (strain Ellin6076), this protein is Acetylglutamate kinase.